The primary structure comprises 1200 residues: Chromosome partition protein Smc (1200 aa).

Position 32-39 (32-39 (PNGCGKSN)) interacts with ATP. Coiled-coil stretches lie at residues 171-219 (VTKY…AEKY) and 252-342 (LENL…MSEA). Positions 528 to 644 (QGIFGLVADV…QDVATARAWT (117 aa)) constitute an SMC hinge domain. Coiled coils occupy residues 679 to 706 (ALQKKREIAELATEVARVEERYNEILTR) and 735 to 762 (LASQEKDLHKAGEDLARVRERVRALEVE). Positions 763-795 (EGQLTQSHQALEHEEEASRGEVAHGQADREGRE) are disordered. Over residues 772-795 (ALEHEEEASRGEVAHGQADREGRE) the composition is skewed to basic and acidic residues. Positions 1002–1039 (HAELSKRYDFLTAQKKDLQSSIEQLKEAIQRIDATSRE) form a coiled coil.

This sequence belongs to the SMC family. In terms of assembly, homodimer. Probably forms the Structural Maintenance of Chromosome (SMC) condensin-like complex with ScpA and ScpB.

It is found in the cytoplasm. A conditionally essential component of the chromosome segregation machinery. Required for chromosome condensation and partitioning. Important for positioning of ParB-parS complexes (ori of replication) and of the ter replication site, as well as for segration of the ParB-parS complex and thus chromosome segregation. May act via the formation of a condensin-like complex containing Smc, ScpA and ScpB that pulls DNA away from mid-cell into both cell halves. The chain is Chromosome partition protein Smc from Myxococcus xanthus (strain DK1622).